Reading from the N-terminus, the 209-residue chain is Orotate phosphoribosyltransferase (209 aa).

Residues R96, K100, H102, and 122-130 each bind 5-phospho-alpha-D-ribose 1-diphosphate; that span reads EDLISTGGS. Residue S126 participates in orotate binding.

The protein belongs to the purine/pyrimidine phosphoribosyltransferase family. PyrE subfamily. As to quaternary structure, homodimer. The cofactor is Mg(2+).

The catalysed reaction is orotidine 5'-phosphate + diphosphate = orotate + 5-phospho-alpha-D-ribose 1-diphosphate. It functions in the pathway pyrimidine metabolism; UMP biosynthesis via de novo pathway; UMP from orotate: step 1/2. In terms of biological role, catalyzes the transfer of a ribosyl phosphate group from 5-phosphoribose 1-diphosphate to orotate, leading to the formation of orotidine monophosphate (OMP). This Streptococcus pyogenes serotype M5 (strain Manfredo) protein is Orotate phosphoribosyltransferase.